Consider the following 102-residue polypeptide: RNA-binding protein Hfq (102 aa).

The Sm domain occupies D9–V68. The disordered stretch occupies residues V63–E102. Residues H70–Q96 show a composition bias toward polar residues.

Belongs to the Hfq family. Homohexamer.

Its function is as follows. RNA chaperone that binds small regulatory RNA (sRNAs) and mRNAs to facilitate mRNA translational regulation in response to envelope stress, environmental stress and changes in metabolite concentrations. Also binds with high specificity to tRNAs. The chain is RNA-binding protein Hfq from Escherichia fergusonii (strain ATCC 35469 / DSM 13698 / CCUG 18766 / IAM 14443 / JCM 21226 / LMG 7866 / NBRC 102419 / NCTC 12128 / CDC 0568-73).